The sequence spans 280 residues: Bifunctional protein FolD (280 aa).

NADP(+) contacts are provided by residues 166–168 (GRS) and serine 191.

It belongs to the tetrahydrofolate dehydrogenase/cyclohydrolase family. Homodimer.

It carries out the reaction (6R)-5,10-methylene-5,6,7,8-tetrahydrofolate + NADP(+) = (6R)-5,10-methenyltetrahydrofolate + NADPH. The catalysed reaction is (6R)-5,10-methenyltetrahydrofolate + H2O = (6R)-10-formyltetrahydrofolate + H(+). Its pathway is one-carbon metabolism; tetrahydrofolate interconversion. Functionally, catalyzes the oxidation of 5,10-methylenetetrahydrofolate to 5,10-methenyltetrahydrofolate and then the hydrolysis of 5,10-methenyltetrahydrofolate to 10-formyltetrahydrofolate. This Teredinibacter turnerae (strain ATCC 39867 / T7901) protein is Bifunctional protein FolD.